The sequence spans 118 residues: Large ribosomal subunit protein uL24 (118 aa).

It belongs to the universal ribosomal protein uL24 family. Part of the 50S ribosomal subunit.

In terms of biological role, one of two assembly initiator proteins, it binds directly to the 5'-end of the 23S rRNA, where it nucleates assembly of the 50S subunit. Its function is as follows. One of the proteins that surrounds the polypeptide exit tunnel on the outside of the subunit. The polypeptide is Large ribosomal subunit protein uL24 (Prochlorococcus marinus (strain SARG / CCMP1375 / SS120)).